A 63-amino-acid polypeptide reads, in one-letter code: MPFAQIYMLEGRSEEQKKAVIEKVTRALVEAVGAPSANVRVWIHDVPKENWGIAGVSAKELGR.

Proline 2 acts as the Proton acceptor; via imino nitrogen in catalysis.

Belongs to the 4-oxalocrotonate tautomerase family. Homohexamer.

The enzyme catalyses (2Z,4E)-2-hydroxyhexa-2,4-dienedioate = (3E)-2-oxohex-3-enedioate. Its pathway is aromatic compound metabolism; salicylate degradation. In terms of biological role, catalyzes the ketonization of 2-hydroxymuconate stereoselectively to yield 2-oxo-3-hexenedioate. This chain is 2-hydroxymuconate tautomerase (aphI), found in Comamonas testosteroni (Pseudomonas testosteroni).